The sequence spans 439 residues: Sex-determination protein fem-3 (439 aa).

Residues 21-45 (RRLKRKANDDDDDDETVRERVDDAE) are disordered.

Component of a complex containing fem-1, fem-2 and fem-3. Interacts with fem-1 and fem-2 (via N-terminus). Part of a E3 ubiquitin-protein ligase complex, at least composed of cul-2, elc-1, tra-1, fem-1, fem-2 and fem-3; mediates the ubiquitination and subsequent proteasomal degradation of tra-1. Interacts with tra-1. Interacts with sel-10. Interacts with tra-2.

Required for male development. In XO (male) animals, fem-3 directs male differentiation in all tissues. In XX (hermaphrodite) animals, it specifies the first 80 or so germ cells to be sperm. Negatively regulates male development when bound to tra-2. Together with fem-2 associates with the CBC(fem-1) E3 ubiquitin-protein ligase complex which mediates the ubiquitination and subsequent proteasomal degradation of tra-1. The protein is Sex-determination protein fem-3 of Caenorhabditis remanei (Caenorhabditis vulgaris).